Here is a 102-residue protein sequence, read N- to C-terminus: RxLR effector protein PexRD41 (102 aa).

An N-terminal signal peptide occupies residues 1-21 (MRSIFYFALAFAALTCSNASA). Residues 39–53 (RSLRVAGQEAARGEE) carry the RxLR-dEER motif.

This sequence belongs to the RxLR effector family. Interacts with host KRBP1.

The protein localises to the secreted. It localises to the host cytoplasm. It is found in the host nucleus. The protein resides in the host nucleolus. In terms of biological role, effector that enhances P.infestans colonization of host plant leaves. During the early stages of P.infestans infection, interacts with and stabilizes host potato K-homology (KH) RNA-binding protein KRBP1, leading to its accumulation. The protein is RxLR effector protein PexRD41 of Phytophthora infestans (strain T30-4) (Potato late blight agent).